A 432-amino-acid chain; its full sequence is Tyrosine-protein phosphatase non-receptor type 1 (432 aa).

Methionine 1 carries the N-acetylmethionine modification. The Tyrosine-protein phosphatase domain maps to 3–277; it reads MEKEFEQIDK…RFSYLAVIEG (275 aa). Residue tyrosine 20 is modified to Phosphotyrosine. Phosphoserine; by PKB/AKT1, CLK1 and CLK2 is present on serine 50. Tyrosine 66 is subject to Phosphotyrosine; by EGFR. Residues aspartate 181 and 215 to 221 each bind substrate; that span reads CSAGIGR. The active-site Phosphocysteine intermediate is the cysteine 215. Cysteine 215 bears the Cysteine persulfide mark. Cysteine 215 is subject to S-nitrosocysteine; in reversibly inhibited form. 2 positions are modified to phosphoserine; by CLK1 and CLK2: serine 242 and serine 243. Substrate is bound at residue glutamine 262. The segment at 297–322 is disordered; that stretch reads EDLEPPPEHVPPPPRPPKRTLEPHNG. 3 positions are modified to phosphoserine: serine 335, serine 362, and serine 364. Residues 350 to 402 are disordered; the sequence is SRAPSIAVHSMSSMSQDTEVRKRMVGGGLQSAQASVPTEEELSPTEEEQKAHR. Threonine 367 carries the phosphothreonine modification.

Belongs to the protein-tyrosine phosphatase family. Non-receptor class 1 subfamily. As to quaternary structure, interacts with EPHA3 (phosphorylated); dephosphorylates EPHA3 and may regulate its trafficking and function. Interacts with MET. Interacts with NCK1. In terms of processing, ser-50 is the major site of phosphorylation as compared to Ser-242 and Ser-243. Activated by phosphorylation at Ser-50. Post-translationally, S-nitrosylation of Cys-215 inactivates the enzyme activity. Sulfhydration at Cys-215 following endoplasmic reticulum stress inactivates the enzyme activity, promoting EIF2AK3/PERK activity. As to expression, found in several tissues including central nervous system, liver and kidney. A high level of expression was found in the hippocampus.

It localises to the endoplasmic reticulum membrane. The enzyme catalyses O-phospho-L-tyrosyl-[protein] + H2O = L-tyrosyl-[protein] + phosphate. Its function is as follows. Tyrosine-protein phosphatase which acts as a regulator of endoplasmic reticulum unfolded protein response. Mediates dephosphorylation of EIF2AK3/PERK; inactivating the protein kinase activity of EIF2AK3/PERK. May play an important role in CKII- and p60c-src-induced signal transduction cascades. May regulate the EFNA5-EPHA3 signaling pathway which modulates cell reorganization and cell-cell repulsion. May also regulate the hepatocyte growth factor receptor signaling pathway through dephosphorylation of MET. This is Tyrosine-protein phosphatase non-receptor type 1 (Ptpn1) from Rattus norvegicus (Rat).